The primary structure comprises 747 residues: MLGKGVVGGGGGTKAPKPSFVSYVRPEEIHTNEKEVTEKEVTLHLLPGEQLLCEASTVLKYVQEDSCQHGVYGRLVCTDFKIAFLGDDESALDNDETQFKNKVIGENDITLHCVDQIYGVFDEKKKTLFGQLKKYPEKLIIHCKDLRVFQFCLRYTKEEEVKRIVSGIIHHTQAPKLLKRLFLFSYATAAQNNTVTDPKNHTVMFDTLKDWCWELERTKGNMKYKAVSVNEGYKVCERLPAYFVVPTPLPEENVQRFQGHGIPIWCWSCHNGSALLKMSALPKEQDDGILQIQKSFLDGIYKTIHRPPYEIVKTEDLSSNFLSLQEIQTAYSKFKQLFLIDNSTEFWDTDIKWFSLLESSSWLDIIRRCLKKAIEITECMEAQNMNVLLLEENASDLCCLISSLVQLMMDPHCRTRIGFQSLIQKEWVMGGHCFLDRCNHLRQNDKEEVPVFLLFLDCVWQLVHQHPPAFEFTETYLTVLSDSLYIPIFSTFFFNSPHQKDTNMGREGQDTQSKPLNLLTVWDWSVQFEPKAQTLLKNPLYVEKPKLDKGQRKGMRFKHQRQLSLPLTQSKSSPKRGFFREETDHLIKNLLGKRISKLINSSDELQDNFREFYDSWHSKSTDYHGLLLPHIEGPEIKVWAQRYLRWIPEAQILGGGQVATLSKLLEMMEEVQSLQEKIDERHHSQQAPQAEAPCLLRNSARLSSLFPFALLQRHSSKPVLPTSGWKALGDEDDLAKREDEFVDLGDV.

One can recognise a Myotubularin phosphatase domain in the interval 205–643 (FDTLKDWCWE…PEIKVWAQRY (439 aa)). Positions 449-558 (VPVFLLFLDC…KGQRKGMRFK (110 aa)) are interaction with MTM1. A phosphoserine mark is found at serine 564, serine 601, and serine 716.

It belongs to the protein-tyrosine phosphatase family. Non-receptor class myotubularin subfamily. As to quaternary structure, heterodimer with lipid phosphatase MTM1. Heterodimer with lipid phosphatase MTMR2. As to expression, expressed in skeletal muscles (at protein level). Ubiquitous with prominent expression in brain, heart, kidney, placenta, and lung.

The protein localises to the cytoplasm. The protein resides in the sarcoplasmic reticulum. Its subcellular location is the myofibril. It is found in the sarcomere. Its function is as follows. Acts as an adapter for the myotubularin-related phosphatases. Regulates phosphatase MTM1 protein stability and possibly its intracellular location. By stabilizing MTM1 protein levels, required for skeletal muscle maintenance but not for myogenesis. In Homo sapiens (Human), this protein is Myotubularin-related protein 12 (MTMR12).